The chain runs to 74 residues: uncharacterized protein (74 aa).

Positions 1-19 are cleaved as a signal peptide; sequence MNPGFDAVDQETAAAQAVA.

This is an uncharacterized protein from Mycobacterium tuberculosis (strain ATCC 25618 / H37Rv).